A 284-amino-acid chain; its full sequence is ATP phosphoribosyltransferase (284 aa).

The protein belongs to the ATP phosphoribosyltransferase family. Long subfamily. As to quaternary structure, equilibrium between an active dimeric form, an inactive hexameric form and higher aggregates. Interconversion between the various forms is largely reversible and is influenced by the natural substrates and inhibitors of the enzyme. Mg(2+) serves as cofactor.

The protein localises to the cytoplasm. The catalysed reaction is 1-(5-phospho-beta-D-ribosyl)-ATP + diphosphate = 5-phospho-alpha-D-ribose 1-diphosphate + ATP. The protein operates within amino-acid biosynthesis; L-histidine biosynthesis; L-histidine from 5-phospho-alpha-D-ribose 1-diphosphate: step 1/9. Feedback inhibited by histidine. Functionally, catalyzes the condensation of ATP and 5-phosphoribose 1-diphosphate to form N'-(5'-phosphoribosyl)-ATP (PR-ATP). Has a crucial role in the pathway because the rate of histidine biosynthesis seems to be controlled primarily by regulation of HisG enzymatic activity. The chain is ATP phosphoribosyltransferase from Mycobacterium avium (strain 104).